The chain runs to 749 residues: Ribosomal RNA large subunit methyltransferase K/L (749 aa).

A THUMP domain is found at 43–154; it reads QGYKVCLWSR…KDKATIYLDL (112 aa). The interval 386–406 is disordered; it reads VEPVAPKKTNKETPEPINPWT.

The protein belongs to the methyltransferase superfamily. RlmKL family.

It localises to the cytoplasm. The enzyme catalyses guanosine(2445) in 23S rRNA + S-adenosyl-L-methionine = N(2)-methylguanosine(2445) in 23S rRNA + S-adenosyl-L-homocysteine + H(+). It carries out the reaction guanosine(2069) in 23S rRNA + S-adenosyl-L-methionine = N(2)-methylguanosine(2069) in 23S rRNA + S-adenosyl-L-homocysteine + H(+). Functionally, specifically methylates the guanine in position 2445 (m2G2445) and the guanine in position 2069 (m7G2069) of 23S rRNA. The protein is Ribosomal RNA large subunit methyltransferase K/L of Psychromonas ingrahamii (strain DSM 17664 / CCUG 51855 / 37).